The primary structure comprises 736 residues: Factor of DNA methylation 4 (736 aa).

Composition is skewed to basic and acidic residues over residues 80-90 and 144-167; these read RKYLRPRERPR and DSGR…SNED. A disordered region spans residues 80-167; it reads RKYLRPRERP…KPDPFFSNED (88 aa). Residues 360 to 597 are a coiled coil; that stretch reads TLVSNLENTL…RSMRELTTRA (238 aa).

Acts in association with FDM3 and FDM5 for RNA-directed DNA methylation (RdDM). The polypeptide is Factor of DNA methylation 4 (Arabidopsis thaliana (Mouse-ear cress)).